A 295-amino-acid polypeptide reads, in one-letter code: Nicotinate-nucleotide pyrophosphorylase [carboxylating] (295 aa).

Substrate contacts are provided by residues R107, 142–144 (TRK), R166, K176, E206, D227, and 256–258 (SGG).

The protein belongs to the NadC/ModD family. In terms of assembly, hexamer formed by 3 homodimers.

It is found in the cytoplasm. The protein resides in the nucleus. It carries out the reaction nicotinate beta-D-ribonucleotide + CO2 + diphosphate = quinolinate + 5-phospho-alpha-D-ribose 1-diphosphate + 2 H(+). Its pathway is cofactor biosynthesis; NAD(+) biosynthesis; nicotinate D-ribonucleotide from quinolinate: step 1/1. Its function is as follows. Involved in the catabolism of quinolinic acid (QA). The chain is Nicotinate-nucleotide pyrophosphorylase [carboxylating] (BNA6) from Saccharomyces cerevisiae (strain ATCC 204508 / S288c) (Baker's yeast).